Reading from the N-terminus, the 485-residue chain is N-succinylglutamate 5-semialdehyde dehydrogenase (485 aa).

220–225 serves as a coordination point for NAD(+); sequence GSANTG. Catalysis depends on residues glutamate 243 and cysteine 278.

The protein belongs to the aldehyde dehydrogenase family. AstD subfamily.

The catalysed reaction is N-succinyl-L-glutamate 5-semialdehyde + NAD(+) + H2O = N-succinyl-L-glutamate + NADH + 2 H(+). Its pathway is amino-acid degradation; L-arginine degradation via AST pathway; L-glutamate and succinate from L-arginine: step 4/5. Functionally, catalyzes the NAD-dependent reduction of succinylglutamate semialdehyde into succinylglutamate. This is N-succinylglutamate 5-semialdehyde dehydrogenase from Aliivibrio fischeri (strain ATCC 700601 / ES114) (Vibrio fischeri).